Here is a 215-residue protein sequence, read N- to C-terminus: MRDELVWIDCEMTGLDLGSDKLIEIAALVTDAELNVLGDGVDVVIHADDAALAAMGEVVTEMHSRSGLIDEVKASTVDLATAEEMVLDYIRTHVKAPKTAPLAGNSIATDRAFIVRDMPALDAYLHYRMIDVSSIKELCRRWYPRIYFGQPVKGLTHRALADIHESIRELQFYRRTAFVAPPGPSTSEIEAVAAALDEGKDAPGPSDSASAPPTG.

Positions 5 to 170 constitute an Exonuclease domain; that stretch reads LVWIDCEMTG…ADIHESIREL (166 aa). Tyr-127 is a catalytic residue. The tract at residues 196–215 is disordered; sequence LDEGKDAPGPSDSASAPPTG. The segment covering 202–215 has biased composition (low complexity); it reads APGPSDSASAPPTG.

This sequence belongs to the oligoribonuclease family.

It is found in the cytoplasm. In terms of biological role, 3'-to-5' exoribonuclease specific for small oligoribonucleotides. The chain is Oligoribonuclease from Mycolicibacterium paratuberculosis (strain ATCC BAA-968 / K-10) (Mycobacterium paratuberculosis).